Here is a 95-residue protein sequence, read N- to C-terminus: Acylphosphatase (95 aa).

The region spanning 7–95 is the Acylphosphatase-like domain; that stretch reads RLTAWVLGTV…PKGEVGFRTR (89 aa). Residues arginine 22 and asparagine 40 contribute to the active site.

The protein belongs to the acylphosphatase family.

The enzyme catalyses an acyl phosphate + H2O = a carboxylate + phosphate + H(+). The chain is Acylphosphatase (acyP) from Corynebacterium diphtheriae (strain ATCC 700971 / NCTC 13129 / Biotype gravis).